A 45-amino-acid polypeptide reads, in one-letter code: Large ribosomal subunit protein bL34 (45 aa).

Positions 1 to 45 (MTKRTFGGTSRKRKRVSGFRVRMRSHTGRRVIRTRRKRGRSRLAA) are disordered. The span at 10-45 (SRKRKRVSGFRVRMRSHTGRRVIRTRRKRGRSRLAA) shows a compositional bias: basic residues.

The protein belongs to the bacterial ribosomal protein bL34 family.

This Synechococcus sp. (strain CC9311) protein is Large ribosomal subunit protein bL34.